The primary structure comprises 277 residues: Kallikrein-13 (277 aa).

Positions Met-1–Ser-16 are cleaved as a signal peptide. N-linked (GlcNAc...) asparagine glycosylation is present at Asn-30. Residues Leu-36–Arg-263 form the Peptidase S1 domain. Cystine bridges form between Cys-42–Cys-178, Cys-61–Cys-77, Cys-157–Cys-224, Cys-189–Cys-203, and Cys-214–Cys-239. Catalysis depends on charge relay system residues His-76 and Asp-124. The active-site Charge relay system is Ser-218. An N-linked (GlcNAc...) asparagine glycan is attached at Asn-225.

It belongs to the peptidase S1 family. Kallikrein subfamily. Expressed in prostate, breast, testis and salivary gland.

It localises to the secreted. This chain is Kallikrein-13 (KLK13), found in Homo sapiens (Human).